The primary structure comprises 958 residues: Protein translocase subunit SecA (958 aa).

ATP contacts are provided by residues Gln86, 104-108, and Asp494; that span reads GEGKT. Disordered stretches follow at residues 863-883 and 902-937; these read AAAT…AEKT and QPIS…GTGK. Positions 941, 943, 952, and 953 each coordinate Zn(2+).

This sequence belongs to the SecA family. Monomer and homodimer. Part of the essential Sec protein translocation apparatus which comprises SecA, SecYEG and auxiliary proteins SecDF. Other proteins may also be involved. Zn(2+) serves as cofactor.

It is found in the cell membrane. Its subcellular location is the cytoplasm. It carries out the reaction ATP + H2O + cellular proteinSide 1 = ADP + phosphate + cellular proteinSide 2.. Its function is as follows. Part of the Sec protein translocase complex. Interacts with the SecYEG preprotein conducting channel. Has a central role in coupling the hydrolysis of ATP to the transfer of proteins into and across the cell membrane, serving as an ATP-driven molecular motor driving the stepwise translocation of polypeptide chains across the membrane. The chain is Protein translocase subunit SecA from Bifidobacterium adolescentis (strain ATCC 15703 / DSM 20083 / NCTC 11814 / E194a).